Consider the following 556-residue polypeptide: Testis-specific protein 10-interacting protein (556 aa).

Polar residues predominate over residues 1–20 (MGQETNMLNAHQQLVRTSSG). 2 disordered regions span residues 1–102 (MGQE…SPRK) and 180–320 (CTSI…GPWD). Basic residues predominate over residues 75–85 (KDRRLRGRNKK). 2 stretches are compositionally biased toward acidic residues: residues 213 to 225 (EPEE…LGAE) and 246 to 260 (LEEE…EAED). Positions 266–278 (PWRRRTSSRRKGR) are enriched in basic residues. A compositionally biased stretch (basic and acidic residues) spans 304 to 320 (EPQRRKPRAKELEGPWD). The stretch at 387-463 (LRAWELQQRE…ELQGIQHRVQ (77 aa)) forms a coiled coil. Residues 503–556 (AGKRDMEGAPRRHRSHRSVGARMEPSSQSPPKMEPTGSQADQHFAPNPDQELSP) form a disordered region. Polar residues predominate over residues 527–543 (PSSQSPPKMEPTGSQAD).

The sequence is that of Testis-specific protein 10-interacting protein (TSGA10IP) from Bos taurus (Bovine).